The sequence spans 468 residues: MAFGKVKQVMGPVVDVEFEGGELPAINSALRVSNKFISDVEFNLVLEVAQHLGDGVVRTISMDQTEGLVRGEKVKALGTQITAPVGREALGRIINVVGEPIDEMGPVNAKEQWGIHRTAPKFEDQATAAAMLMTGIKVVDLLAPYAKGGKIGLFGGAGVGKTVLIQELIRNIATEHGGFSVFAGVGERTREGNDLWQEMKQSGVLAKTSLVFGQMNEPPGARARVALTGLTVAEYFRDVENQDVLFFVDNIFRFTQAGAEVSALLGRIPSAVGYQPTLATEMGTLQERITSTKKGSITSVQAVYVPADDYTDPAPATTFTHLDATTNLDRDIAAMAIFPAVHPLTSTSRLLDPTVIGEEHYKCARDVQALLQRNRELQDIIAILGMDELSESDKLVVSRSRKIQRFLSQPFFVAEQFTGLPGKYVDIKDTVKGFREILDGKHDALPEQAFYLVGTIEDAIEKAKKLQA.

ATP is bound at residue 155-162 (GGAGVGKT).

This sequence belongs to the ATPase alpha/beta chains family. F-type ATPases have 2 components, CF(1) - the catalytic core - and CF(0) - the membrane proton channel. CF(1) has five subunits: alpha(3), beta(3), gamma(1), delta(1), epsilon(1). CF(0) has three main subunits: a(1), b(2) and c(9-12). The alpha and beta chains form an alternating ring which encloses part of the gamma chain. CF(1) is attached to CF(0) by a central stalk formed by the gamma and epsilon chains, while a peripheral stalk is formed by the delta and b chains.

Its subcellular location is the cell inner membrane. It catalyses the reaction ATP + H2O + 4 H(+)(in) = ADP + phosphate + 5 H(+)(out). Functionally, produces ATP from ADP in the presence of a proton gradient across the membrane. The catalytic sites are hosted primarily by the beta subunits. This is ATP synthase subunit beta from Bdellovibrio bacteriovorus (strain ATCC 15356 / DSM 50701 / NCIMB 9529 / HD100).